We begin with the raw amino-acid sequence, 193 residues long: Segregation and condensation protein B (193 aa).

Belongs to the ScpB family. In terms of assembly, homodimer. Homodimerization may be required to stabilize the binding of ScpA to the Smc head domains. Component of a cohesin-like complex composed of ScpA, ScpB and the Smc homodimer, in which ScpA and ScpB bind to the head domain of Smc. The presence of the three proteins is required for the association of the complex with DNA.

It localises to the cytoplasm. Its function is as follows. Participates in chromosomal partition during cell division. May act via the formation of a condensin-like complex containing Smc and ScpA that pull DNA away from mid-cell into both cell halves. The chain is Segregation and condensation protein B from Clostridium botulinum (strain Kyoto / Type A2).